Reading from the N-terminus, the 900-residue chain is uncharacterized protein (900 aa).

The segment covering 1 to 16 (MGSNKEAKNIDSKNDR) has biased composition (basic and acidic residues). Disordered stretches follow at residues 1-84 (MGSN…KLSS), 103-160 (NSSR…PDPS), 512-556 (NFNQ…KKSG), 568-613 (LAST…KSAN), and 648-676 (KRSS…NSFP). Positions 17–27 (GLTSITSNKIS) are enriched in polar residues. A compositionally biased stretch (basic and acidic residues) spans 30–58 (KAHDNHTSSMITEHKNADKEKGKQEKESR). Composition is skewed to low complexity over residues 63 to 76 (QSSS…PQVS) and 103 to 127 (NSSR…QLSK). Ser105 carries the post-translational modification Phosphoserine. A compositionally biased stretch (basic residues) spans 129 to 143 (GLHHHHTSNNKHSHR). Positions 528 to 537 (SSRSLSLPSS) are enriched in low complexity. The span at 543 to 553 (KRKKSPTKATK) shows a compositional bias: basic residues. 2 stretches are compositionally biased toward low complexity: residues 570–601 (STSH…SSPP) and 665–676 (SPISSNSDNSFP).

This is an uncharacterized protein from Saccharomyces cerevisiae (strain ATCC 204508 / S288c) (Baker's yeast).